A 438-amino-acid polypeptide reads, in one-letter code: chitinase-like effector (438 aa).

An N-terminal signal peptide occupies residues 1-23 (MFTPLSSVTALLALSSAFLGAQA). In terms of domain architecture, GH18 spans 54-437 (FIAKGYYTGW…DAIRSGAGLS (384 aa)). A chitin-binding site is contributed by W416.

The protein belongs to the glycosyl hydrolase 18 family.

It is found in the secreted. Functionally, catalytically impaired chitinase that binds efficiently to chitin, but not to chitosan, xylan, or cellulose. Despite the lack of chitinolytic activity, retains substrate binding specificity and acts as an effector to prevent chitin-triggered immunity by sequestering immunogenic chitin fragments. Does not function in the protection of fungal cell wall against plant hydrolytic enzymes. In Moniliophthora perniciosa (Witches'-broom disease fungus), this protein is chitinase-like effector.